Here is a 690-residue protein sequence, read N- to C-terminus: Ligand of Numb protein X 2 (690 aa).

The RING-type zinc finger occupies 50–88; sequence CHICLQPLLQPLDTPCGHTFCYKCLRNFLQEKDFCPLDR. The disordered stretch occupies residues 198-224; that stretch reads STWSEEPGLDNPAFEESAGADTTQQPL. Positions 208–211 match the NPXY motif motif; sequence NPAF. PDZ domains follow at residues 233 to 318, 339 to 422, 468 to 554, and 600 to 688; these read TIEI…LRER, QVAL…ARPG, HITV…KALE, and DIVL…WPGS. The segment at 418–455 is disordered; that stretch reads IARPGKPQPGNTIREAGNHSSSSQHHTPPPYYSRPSSH.

As to quaternary structure, interacts with the phosphotyrosine interaction domain of NUMB.

The sequence is that of Ligand of Numb protein X 2 (LNX2) from Homo sapiens (Human).